We begin with the raw amino-acid sequence, 466 residues long: Cysteine--tRNA ligase (466 aa).

Cysteine 28 contacts Zn(2+). A 'HIGH' region motif is present at residues 30 to 40; the sequence is PTVYNYIHIGN. Zn(2+) is bound by residues cysteine 208, histidine 233, and glutamate 237. The 'KMSKS' region motif lies at 265 to 269; sequence KMSKS. Lysine 268 contacts ATP.

It belongs to the class-I aminoacyl-tRNA synthetase family. Monomer. Requires Zn(2+) as cofactor.

It is found in the cytoplasm. The enzyme catalyses tRNA(Cys) + L-cysteine + ATP = L-cysteinyl-tRNA(Cys) + AMP + diphosphate. This chain is Cysteine--tRNA ligase, found in Staphylococcus carnosus (strain TM300).